The primary structure comprises 310 residues: Protease HtpX homolog (310 aa).

2 helical membrane passes run 16-36 and 55-75; these read NAVLTTYCAIFAFIGLLVDAI and IFPTITIVMFVVAFVIILVCI. H166 lines the Zn(2+) pocket. E167 is a catalytic residue. Residue H170 coordinates Zn(2+). Transmembrane regions (helical) follow at residues 182–202 and 214–234; these read VGILSNIMLLVANFSVYFFMG and MILWVLQIILPFLTLLLQMYL. Residue E239 coordinates Zn(2+).

Belongs to the peptidase M48B family. Requires Zn(2+) as cofactor.

The protein resides in the cell inner membrane. The sequence is that of Protease HtpX homolog from Helicobacter pylori (strain J99 / ATCC 700824) (Campylobacter pylori J99).